The sequence spans 67 residues: Large ribosomal subunit protein bL35 (67 aa).

Positions 22 to 45 are disordered; it reads GKIKRWKSGGAHYNTKKSSKRKRH. Over residues 35 to 45 the composition is skewed to basic residues; that stretch reads NTKKSSKRKRH.

It belongs to the bacterial ribosomal protein bL35 family.

This Aquifex aeolicus (strain VF5) protein is Large ribosomal subunit protein bL35.